The primary structure comprises 505 residues: Kelch-like protein 42 (505 aa).

The region spanning 5–78 (EMVQIRLEDR…INAGGAREGW (74 aa)) is the BTB domain. S43 bears the Phosphoserine mark. 6 Kelch repeats span residues 176-234 (PGDV…PLAN), 235-282 (NLPP…NEWL), 284-325 (VASM…DAWN), 327-372 (VAPL…DMWT), 374-429 (FETC…RQWL), and 431-480 (LKEN…DSWE).

As to quaternary structure, component of the BCR(KLHL42) E3 ubiquitin ligase complex, at least composed of CUL3 and KLHL42. Interacts (via the BTB domain) with CUL3. Interacts (via the kelch domains) with KATNA1.

It is found in the cytoplasm. The protein resides in the cytoskeleton. Its subcellular location is the spindle. The protein operates within protein modification; protein ubiquitination. In terms of biological role, substrate-specific adapter of a BCR (BTB-CUL3-RBX1) E3 ubiquitin-protein ligase complex required for mitotic progression and cytokinesis. The BCR(KLHL42) E3 ubiquitin ligase complex mediates the ubiquitination and subsequent degradation of KATNA1. Involved in microtubule dynamics throughout mitosis. The sequence is that of Kelch-like protein 42 (KLHL42) from Homo sapiens (Human).